A 60-amino-acid chain; its full sequence is Mastoparan-VT1 (60 aa).

An N-terminal signal peptide occupies residues 1 to 25 (MKNTILILFTAFIALLGFFGMSAEA). Positions 26–45 (LADLKADPLAGPNPDADPEA) are excised as a propeptide. AXPX repeat units follow at residues 31-34 (ADPL), 35-38 (AGPN), and 41-44 (ADPE). Position 59 is a leucine amide (Leu-59).

This sequence belongs to the MCD family. Mastoparan subfamily. Expressed by the venom gland.

It is found in the secreted. In terms of biological role, antimicrobial peptide with activities against Gram-negative and Gram-positive bacteria and the fungi C.albicans and C.parapsilosis. Exhibits little hemolytic activity against washed human erythrocytes. Also acts as a mast cell degranulating peptide. Its mast cell degranulation activity may be related to the activation of G-protein coupled receptors in mast cells as well as interaction with other proteins located in cell endosomal membranes in the mast cells. Antimicrobial peptide with activities against Gram-negative and Gram-positive bacteria and the fungi C.albicans and C.parapsilosis. Exhibits little hemolytic activity against washed human erythrocytes. Also acts as a mast cell degranulating peptide. The polypeptide is Mastoparan-VT1 (Vespa tropica (Greater banded hornet)).